The primary structure comprises 513 residues: MGAPVLPAAFGFLASARTGGGRAPGPVFATRGSHTDIDTPQGERSLAATLVHAPSVAPDRAVARSLTGAPTTAVLAGEIYNRDELLSVLPAGPAPEGDAELVLRLLERYDLHAFRLVNGRFATVVRTGDRVLLATDHAGSVPLYTCVAPGEVRASTEAKALAAHRDPKGFPLADARRVAGLTGVYQVPAGAVMDIDLGSGTAVTHRTWTPGLSRRILPEGEAVAAVRAALEKAVAQRVTPGDTPLVVLSGGIDSSGVAACAHRAAGELDTVSMGTDTSNEFREARAVVDHLRTRHREITIPTTELLAQLPYAVWASESVDPDIIEYLLPLTALYRALDGPERRILTGYGADIPLGGMHREDRLPALDTVLAHDMATFDGLNEMSPVLSTLAGHWTTHPYWDREVLDLLVSLEAGLKRRHGRDKWVLRAAMADALPAETVNRPKLGVHEGSGTTSSFSRLLLDHGVAEDRVHEAKRQVVRELFDLTVGGGRHPSEVDTDDVVRSVADRTARGAA.

Positions 253 and 351 each coordinate Mg(2+).

The protein belongs to the asparagine synthetase family. Homodimer. The cofactor is Mg(2+).

The enzyme catalyses N(2)-(2-carboxyethyl)-L-arginine + ATP = deoxyamidinoproclavaminate + AMP + diphosphate + H(+). It participates in antibiotic biosynthesis; clavulanate biosynthesis; clavulanate from D-glyceraldehyde 3-phosphate and L-arginine: step 2/8. The chain is Carboxyethyl-arginine beta-lactam-synthase (bls) from Streptomyces clavuligerus.